We begin with the raw amino-acid sequence, 172 residues long: Phosphopantetheine adenylyltransferase (172 aa).

Threonine 13 is a binding site for substrate. Residues 13–14 and histidine 21 contribute to the ATP site; that span reads TF. Positions 45, 81, and 95 each coordinate substrate. ATP contacts are provided by residues 96–98, glutamate 106, and 131–137; these read GLR and SQFISSR.

This sequence belongs to the bacterial CoaD family. As to quaternary structure, homohexamer. Mg(2+) is required as a cofactor.

It localises to the cytoplasm. The enzyme catalyses (R)-4'-phosphopantetheine + ATP + H(+) = 3'-dephospho-CoA + diphosphate. It functions in the pathway cofactor biosynthesis; coenzyme A biosynthesis; CoA from (R)-pantothenate: step 4/5. Reversibly transfers an adenylyl group from ATP to 4'-phosphopantetheine, yielding dephospho-CoA (dPCoA) and pyrophosphate. This chain is Phosphopantetheine adenylyltransferase, found in Rhodospirillum rubrum (strain ATCC 11170 / ATH 1.1.1 / DSM 467 / LMG 4362 / NCIMB 8255 / S1).